Here is a 525-residue protein sequence, read N- to C-terminus: GMP synthase [glutamine-hydrolyzing] (525 aa).

Positions 9-207 (RVLILDFGSQ…VLEIAGCEPL (199 aa)) constitute a Glutamine amidotransferase type-1 domain. The active-site Nucleophile is the C86. Residues H181 and E183 contribute to the active site. The 193-residue stretch at 208 to 400 (WTPANIVEDA…LGLPYDMVYR (193 aa)) folds into the GMPS ATP-PPase domain. An ATP-binding site is contributed by 235 to 241 (SGGVDSS).

As to quaternary structure, homodimer.

The enzyme catalyses XMP + L-glutamine + ATP + H2O = GMP + L-glutamate + AMP + diphosphate + 2 H(+). It functions in the pathway purine metabolism; GMP biosynthesis; GMP from XMP (L-Gln route): step 1/1. Functionally, catalyzes the synthesis of GMP from XMP. This chain is GMP synthase [glutamine-hydrolyzing], found in Teredinibacter turnerae (strain ATCC 39867 / T7901).